The sequence spans 319 residues: MAPFFSAMTSKKQSQGLPKGPHPDNAHRDGYDFSALVASHPPLKPFVRANAYGNLSIDFALPEAVKALNCALLKHHYGISRWDIPKGFLCPPIPGRVDYLHHLEDLLRQTPGTDGLPLLDIGTGANGIYALLAASRFGRAVVATDIAKASLTNVATILKANPGLEKRISLRFQSNPRHILTGVTQTNEQFAACVCNPPFHASAAEAALGTNRKLEGLAKSRGQRHISGPGKPQTLNFGGQDAELWCDGGERSFLLRLIDESARLPDLCVWFTTLVSKSDNLRPCKRRLEQRGASEIKVIEMQQGQKITRILAWRFESVT.

The interval methionine 1–asparagine 25 is disordered. Polar residues predominate over residues alanine 7 to glycine 16.

Belongs to the methyltransferase superfamily. METTL16/RlmF family.

It is found in the cytoplasm. It catalyses the reaction adenosine(1618) in 23S rRNA + S-adenosyl-L-methionine = N(6)-methyladenosine(1618) in 23S rRNA + S-adenosyl-L-homocysteine + H(+). Its function is as follows. Specifically methylates the adenine in position 1618 of 23S rRNA. The protein is Ribosomal RNA large subunit methyltransferase F of Shewanella amazonensis (strain ATCC BAA-1098 / SB2B).